Reading from the N-terminus, the 405-residue chain is uncharacterized protein (405 aa).

The next 12 helical transmembrane spans lie at 19–39 (IVSI…PLAV), 48–68 (MGFS…ATLL), 85–105 (IVVF…LADI), 129–149 (SFAG…LHIG), 156–176 (GIVT…CYAW), 178–198 (GLQG…LLAL), 224–244 (GMAL…ITLF), 252–272 (GAAF…LLFP), 283–303 (VAMI…TAAM), 309–329 (IGVL…GVVA), 344–364 (TYTV…GLVM), and 366–386 (WAGV…ALLL).

The protein belongs to the major facilitator superfamily. YhhS family.

Its subcellular location is the cell inner membrane. This is an uncharacterized protein from Salmonella typhi.